We begin with the raw amino-acid sequence, 934 residues long: Serine/threonine-protein kinase PknD (934 aa).

Residues 4–296 enclose the Protein kinase domain; that stretch reads YELIRLIGKG…ELRQALQPYL (293 aa). ATP is bound by residues 10 to 18 and K33; that span reads IGKGGMGEV. Residue D138 is the Proton acceptor of the active site.

This sequence belongs to the protein kinase superfamily. Ser/Thr protein kinase family. Interacts with Pkn1. In terms of processing, autophosphorylated on serine and threonine residues. Present in elementary bodies 40 hours post-infection as 2 bands of approximately 55 to 60 and 45 to 50 kDa, which may be due to differential phosphorylation as well as degradation; an enzymatically active full-length protein can also be detected.

The catalysed reaction is L-seryl-[protein] + ATP = O-phospho-L-seryl-[protein] + ADP + H(+). The enzyme catalyses L-threonyl-[protein] + ATP = O-phospho-L-threonyl-[protein] + ADP + H(+). In terms of biological role, together with the serine/threonine kinase Pkn1, may play a role in the specific interactions with host proteins during intracellular growth. Autophosphorylates and also phosphorylates Pkn1. The sequence is that of Serine/threonine-protein kinase PknD from Chlamydia trachomatis serovar L2 (strain ATCC VR-902B / DSM 19102 / 434/Bu).